The sequence spans 72 residues: Beta-defensin 104A (72 aa).

An N-terminal signal peptide occupies residues 1–22 (MRRLVLLLAISLLLYQDLPVRS). 3 disulfides stabilise this stretch: cysteine 30–cysteine 57, cysteine 37–cysteine 51, and cysteine 41–cysteine 58.

This sequence belongs to the beta-defensin family.

Its subcellular location is the secreted. Its function is as follows. Has antimicrobial activity. The protein is Beta-defensin 104A (DEFB104A) of Gorilla gorilla gorilla (Western lowland gorilla).